A 523-amino-acid chain; its full sequence is REST corepressor 2 (523 aa).

A disordered region spans residues 1 to 43 (MPSVMEKPSAGSGILSRSRAKTAPNGGQPHSEDDSSEEEHSHD). A compositionally biased stretch (basic and acidic residues) spans 30–43 (HSEDDSSEEEHSHD). S31, S35, S36, and S63 each carry phosphoserine. Positions 44–129 (SMIRVGTNYQ…KSLADLANFT (86 aa)) constitute an ELM2 domain. K88 is covalently cross-linked (Glycyl lysine isopeptide (Lys-Gly) (interchain with G-Cter in SUMO2)). The 52-residue stretch at 130–181 (PFPDEWTVEDKVLFEQAFGFHGKCFQRIQQMLPDKLIPSLVKYYYSWKKTRS) folds into the SANT 1 domain. The interval 185 to 265 (VMDRQARRLG…RRRPPKGMYL (81 aa)) is disordered. At S202 the chain carries Phosphoserine. Residues 248 to 260 (YRHHPLRTRRRPP) are compositionally biased toward basic residues. The stretch at 283-314 (TLRGLDSQLISLKRQVQSMKQTNSSLRQALEG) forms a coiled coil. The 52-residue stretch at 327 to 378 (KFNSRWTTDEQLLAVQAIRRYGKDFGAIAEVIGNKTLTQVKTFFVSYRRRFN) folds into the SANT 2 domain. Residues 387–523 (EAEQDGAPTA…AQLEPPAPSL (137 aa)) are disordered. Positions 432 to 459 (SVPPAPPPPPPPTSLSQPPPLLRPPLPT) are enriched in pro residues. The span at 460 to 482 (APTLLRQPPPLQQGRFLQPRLAP) shows a compositional bias: low complexity. Position 479 is an asymmetric dimethylarginine (R479).

Belongs to the CoREST family.

It is found in the nucleus. In terms of biological role, may act as a component of a corepressor complex that represses transcription. This Rattus norvegicus (Rat) protein is REST corepressor 2 (Rcor2).